The chain runs to 30 residues: Protamine-YII (30 aa).

The tract at residues 1–30 (PRRRTRRASRPVRRRRPRRVSRRRRARRRR) is disordered.

In terms of tissue distribution, testis.

The protein resides in the nucleus. It localises to the chromosome. In terms of biological role, protamines substitute for histones in the chromatin of sperm during the haploid phase of spermatogenesis. They compact sperm DNA into a highly condensed, stable and inactive complex. The chain is Protamine-YII from Clupea harengus (Atlantic herring).